Here is a 360-residue protein sequence, read N- to C-terminus: Alpha-2-macroglobulin receptor-associated protein (360 aa).

Residues 1–33 (MAPLRDRVSTLPRLQLLVLLLLPLLLVPQPIAG) form the signal peptide. Residues Ser53 and Ser138 each carry the phosphoserine modification. Residues 222–302 (SKHSELKDRL…KHNHYQKQLE (81 aa)) are a coiled coil. Residues 240–356 (RLRKVSHQGY…DLSSRVSRAR (117 aa)) form an LDL receptor binding region. Asn271 is a glycosylation site (N-linked (GlcNAc...) asparagine). The Prevents secretion from ER motif lies at 357-360 (HNEL).

This sequence belongs to the alpha-2-MRAP family. Interacts with the LRP1/alpha-2-macroglobulin receptor heavy and light chains; the interaction is transient and coincides with a reduction of ligand binding by the receptor. Interacts with LRP2/glycoprotein 330. Interacts with LRP1B; binding is followed by internalization and degradation. Interacts with LDLR. Interacts with SORL1. Interacts with LRP1; this interaction is followed by rapid internalization. In terms of processing, N-glycosylated.

Its subcellular location is the rough endoplasmic reticulum lumen. The protein resides in the endoplasmic reticulum-Golgi intermediate compartment lumen. It is found in the golgi apparatus. It localises to the cis-Golgi network. The protein localises to the golgi apparatus lumen. Its subcellular location is the endosome lumen. The protein resides in the cell surface. Molecular chaperone for LDL receptor-related proteins that may regulate their ligand binding activity along the secretory pathway. This chain is Alpha-2-macroglobulin receptor-associated protein (Lrpap1), found in Rattus norvegicus (Rat).